We begin with the raw amino-acid sequence, 1228 residues long: Probable phospholipid-transporting ATPase 5 (1228 aa).

Topologically, residues 1 to 74 are cytoplasmic; it reads MARGRIRSKL…TTRYNLITFF (74 aa). Residues 75-96 form a helical membrane-spanning segment; sequence PKSLYEQFHRAANLYFLVAAIL. Over 97-100 the chain is Extracellular; it reads SVFP. Residues 101-123 traverse the membrane as a helical segment; sequence LSPFNKWSMIAPLVFVVGLSMLK. Over 124–305 the chain is Cytoplasmic; that stretch reads EALEDWRRFM…SRIERTMDYI (182 aa). A helical transmembrane segment spans residues 306 to 327; that stretch reads IYTLLVLLILISCISSSGFAWE. The Extracellular segment spans residues 328 to 359; it reads TEFHMPKMWYLRPGEPIDFTNPINPIYAGVVH. A helical membrane pass occupies residues 360-377; the sequence is LITALLLYGYLIPISLYV. Topologically, residues 378–934 are cytoplasmic; that stretch reads SIEVVKVWQA…HGHWCYKRIA (557 aa). Catalysis depends on aspartate 425, which acts as the 4-aspartylphosphate intermediate. Lysine 616 participates in a covalent cross-link: Glycyl lysine isopeptide (Lys-Gly) (interchain with G-Cter in ubiquitin). Mg(2+) contacts are provided by aspartate 879 and aspartate 883. Residues 935–954 form a helical membrane-spanning segment; it reads QMICYFFYKNIAFGLTLFYF. The Extracellular portion of the chain corresponds to 955 to 968; that stretch reads EAFTGFSGQSVYND. A helical transmembrane segment spans residues 969–988; the sequence is YYLLLFNVVLTSLPVIALGV. Over 989–1018 the chain is Cytoplasmic; it reads FEQDVSSEICLQFPALYQQGTKNLFFDWSR. Residues 1019-1041 traverse the membrane as a helical segment; sequence ILGWMCNGVYASLVIFFLNIGII. Topologically, residues 1042-1054 are extracellular; it reads YSQAFRDNGQTAD. The helical transmembrane segment at 1055–1077 threads the bilayer; it reads MDAVGTTMFTCIIWAANVQIALT. The Cytoplasmic portion of the chain corresponds to 1078 to 1083; that stretch reads MSHFTW. The chain crosses the membrane as a helical span at residues 1084–1104; that stretch reads IQHVLIWGSIGMWYLFVAIYS. The Extracellular segment spans residues 1105–1117; it reads MMPPSYSGNIYRI. A helical membrane pass occupies residues 1118 to 1146; that stretch reads LDEILAPAPIYWMATLLVTVAAVLPYVAH. At 1147–1228 the chain is on the cytoplasmic side; it reads IAFQRFLNPL…AQDAMSPRSL (82 aa).

It belongs to the cation transport ATPase (P-type) (TC 3.A.3) family. Type IV subfamily.

The protein localises to the membrane. It catalyses the reaction ATP + H2O + phospholipidSide 1 = ADP + phosphate + phospholipidSide 2.. Its function is as follows. Involved in transport of phospholipids. This Arabidopsis thaliana (Mouse-ear cress) protein is Probable phospholipid-transporting ATPase 5.